Reading from the N-terminus, the 251-residue chain is Lactose phosphotransferase system repressor (251 aa).

The HTH deoR-type domain maps to 3–58 (KHERLDEIAKLVNKKGTIRTNEIVEGLNVSDMTVRRDLIELENKGILTKIHGGARS). The segment at residues 20–39 (IRTNEIVEGLNVSDMTVRRD) is a DNA-binding region (H-T-H motif).

Its function is as follows. Repressor of the lactose catabolism operon. Galactose-6-phosphate is the inducer. This chain is Lactose phosphotransferase system repressor (lacR), found in Staphylococcus aureus (strain MRSA252).